A 510-amino-acid polypeptide reads, in one-letter code: Putative glycerol-3-phosphate transporter 3 (510 aa).

12 helical membrane-spanning segments follow: residues 31 to 51 (LSFK…YIAF), 91 to 111 (ALLG…MFVA), 123 to 143 (FLTI…VAFW), 158 to 178 (LAGW…GNWF), 185 to 205 (VIMG…TLIA), 217 to 237 (FVGP…FLPV), 279 to 299 (VGFL…CLFF), 331 to 351 (GNLS…AGYF), 355 to 375 (LDGR…ALFL), 378 to 398 (IYGH…GLFV), 436 to 456 (TGSV…AISW), and 459 to 479 (VFYM…TLII).

The protein belongs to the major facilitator superfamily. Organophosphate:Pi antiporter (OPA) (TC 2.A.1.4) family.

The protein localises to the membrane. This chain is Putative glycerol-3-phosphate transporter 3, found in Arabidopsis thaliana (Mouse-ear cress).